A 271-amino-acid chain; its full sequence is Aquaporin-1 (271 aa).

Residues 1–11 are Cytoplasmic-facing; sequence MASEFKKKLFW. A helical transmembrane segment spans residues 12 to 29; it reads RAVVAEFLAMILFIFISI. At 30 to 48 the chain is on the extracellular side; the sequence is GSALGFHYPIKSNQTTGAV. An N-linked (GlcNAc...) asparagine glycan is attached at Asn-42. A helical membrane pass occupies residues 49-67; that stretch reads QDNVKVSLAFGLSIATLAQ. Residues 68–70 are Cytoplasmic-facing; that stretch reads SVG. The stretch at 71 to 84 is an intramembrane region; sequence HISGAHLNPAVTLG. Residues 78-80 carry the NPA 1 motif; that stretch reads NPA. The Cytoplasmic segment spans residues 85–92; it reads LLLSCQIS. The chain crosses the membrane as a helical span at residues 93–111; that stretch reads VLRAIMYIIAQCVGAIVAT. Residues 112–135 lie on the Extracellular side of the membrane; the sequence is AILSGITSSLPDNSLGLNALAPGV. A helical transmembrane segment spans residues 136–155; it reads NSGQGLGIEIIGTLQLVLCV. Residues 156-165 are Cytoplasmic-facing; the sequence is LATTDRRRRD. A helical transmembrane segment spans residues 166 to 183; sequence LGGSGPLAIGFSVALGHL. The Extracellular portion of the chain corresponds to 184–188; it reads LAIDY. The stretch at 189–201 is an intramembrane region; the sequence is TGCGINPARSFGS. Residues 194-196 carry the NPA 2 motif; the sequence is NPA. Over 202–208 the chain is Extracellular; the sequence is SVITHNF. The helical transmembrane segment at 209–226 threads the bilayer; the sequence is QDHWIFWVGPFIGAALAV. Residues 227–271 are Cytoplasmic-facing; it reads LIYDFILAPRSSDLTDRVKVWTSGQVEEYDLDADDINSRVEMKPK. The residue at position 249 (Ser-249) is a Phosphoserine. Tyr-255 is modified (phosphotyrosine). Ser-264 carries the post-translational modification Phosphoserine.

Belongs to the MIP/aquaporin (TC 1.A.8) family. In terms of assembly, homotetramer; each monomer provides an independent water pore. Component of the ankyrin-1 complex in the erythrocyte, composed of ANK1, RHCE, RHAG, SLC4A1, EPB42, GYPA, GYPB and AQP1. Interacts with EPHB2; involved in endolymph production in the inner ear. Identified in a complex with STOM. Interacts (via the N-terminal) with ANK1 (via ANK 1-5 repeats). Interacts (via the C-terminal) with EPB42.

The protein resides in the cell membrane. It carries out the reaction H2O(in) = H2O(out). The enzyme catalyses nitric oxide(out) = nitric oxide(in). It catalyses the reaction CO2(out) = CO2(in). The catalysed reaction is glycerol(in) = glycerol(out). It carries out the reaction H2O2(out) = H2O2(in). The enzyme catalyses K(+)(in) = K(+)(out). It catalyses the reaction Na(+)(in) = Na(+)(out). Functionally, forms a water channel that facilitates the transport of water across cell membranes, playing a crucial role in water homeostasis in various tissues. Could also be permeable to small solutes including hydrogen peroxide, glycerol and gases such as amonnia (NH3), nitric oxide (NO) and carbon dioxide (CO2). Recruited to the ankyrin-1 complex, a multiprotein complex of the erythrocyte membrane, it could be part of a CO2 metabolon, linking facilitated diffusion of CO2 across the membrane, anion exchange of Cl(-)/HCO3(-) and interconversion of dissolved CO2 and carbonic acid in the cytosol. In vitro, it shows non-selective gated cation channel activity and may be permeable to cations like K(+) and Na(+) in vivo. This is Aquaporin-1 from Bos taurus (Bovine).